The chain runs to 313 residues: T-box protein 37 (313 aa).

A DNA-binding region (T-box) is located at residues 19–195 (IWEKFYPKTE…HNKFASGFRS (177 aa)). The segment at 193 to 228 (FRSNGKRRLSSESENSENSPPKRSASAISSLTPPAI) is disordered.

The protein localises to the nucleus. Functionally, transcription factor. Required for mesodermal induction, acting redundantly with transcription factor tbx-38. Together with tbx-38, acts by inducing cell fates in the AB lineage, thereby playing a role in development of the anterior pharynx. The polypeptide is T-box protein 37 (tbx-37) (Caenorhabditis elegans).